The primary structure comprises 402 residues: Ferredoxin--NADP reductase (402 aa).

The 57-residue stretch at 18-74 (NRLFIYEVVGLGGDGRNENSLVRKSGTTFITVPYARMNQEMQRITKLGGKIVSIRPA) folds into the CpcD-like domain. Residues 80–101 (IVSEGQSSAQASAQSPMASSTK) form a disordered region. Residues 85–99 (QSSAQASAQSPMASS) are compositionally biased toward low complexity. In terms of domain architecture, FAD-binding FR-type spans 120 to 245 (KTPFLGKCIE…TGPVGKEMLL (126 aa)). Residues 179–182 (RLYS), 200–202 (CVR), Tyr206, 218–220 (VCS), and Thr260 contribute to the FAD site. 2 residues coordinate NADP(+): Ser182 and Arg202. Residues Thr260, 292–293 (VP), 322–323 (SR), Lys332, 332–336 (KVYVQ), 361–362 (GL), and Glu400 each bind NADP(+).

The protein belongs to the ferredoxin--NADP reductase type 1 family. Requires FAD as cofactor.

Its subcellular location is the cellular thylakoid membrane. It catalyses the reaction 2 reduced [2Fe-2S]-[ferredoxin] + NADP(+) + H(+) = 2 oxidized [2Fe-2S]-[ferredoxin] + NADPH. The protein is Ferredoxin--NADP reductase (petH) of Picosynechococcus sp. (strain ATCC 27264 / PCC 7002 / PR-6) (Agmenellum quadruplicatum).